A 196-amino-acid polypeptide reads, in one-letter code: APGW-amide-related neuropeptide (196 aa).

An N-terminal signal peptide occupies residues 1–22; the sequence is METLNIFLVIFSLLGTIIIASS. A propeptide spanning residues 23-48 is cleaved from the precursor; it reads SDESSERKKRDLDTIDDTNNDFLTAD. Tryptophan amide is present on Trp54. Residues 58–68 constitute a propeptide that is removed on maturation; it reads SFDDDILNNLD. Trp74 bears the Tryptophan amide mark. A propeptide spanning residues 78-88 is cleaved from the precursor; that stretch reads SDMLFDSEEIE. Trp94 carries the tryptophan amide modification. The propeptide occupies 98–105; the sequence is SSSLYDDE. Trp111 is subject to Tryptophan amide. Residues 115 to 129 constitute a propeptide that is removed on maturation; the sequence is SSALLDDLSLYNSIV. A Tryptophan amide modification is found at Trp135. The propeptide occupies 139-146; it reads SDTFKVDI. Trp151 and Trp158 each carry tryptophan amide. The propeptide occupies 162 to 196; that stretch reads SGPNMCMDFQDEILQLYKLLNEAEKLHSECEALNI.

As to expression, expressed in cerebral, pedal and visceral ganglia. TPGW-amide is found in pedal and cerebral ganglia and in shell adductor muscle (at protein level). RPGW-amide and KPGW-amide are found in pedal retractor muscle, ABRM and shell adductor muscle (at protein level).

RPGW-amide, KPGW-amide and TPGW-amide tetrapeptides are involved in control of muscle contraction and may function as neurotransmitters. These peptides increase tension of the pedal retractor muscle and, in conjunction with FMRF-amide, increase peak tension of the anterior byssus retractor muscle (ABRM). The sequence is that of APGW-amide-related neuropeptide from Mytilus edulis (Blue mussel).